Here is a 178-residue protein sequence, read N- to C-terminus: Large ribosomal subunit protein uL6 (178 aa).

It belongs to the universal ribosomal protein uL6 family. As to quaternary structure, part of the 50S ribosomal subunit.

This protein binds to the 23S rRNA, and is important in its secondary structure. It is located near the subunit interface in the base of the L7/L12 stalk, and near the tRNA binding site of the peptidyltransferase center. In Levilactobacillus brevis (strain ATCC 367 / BCRC 12310 / CIP 105137 / JCM 1170 / LMG 11437 / NCIMB 947 / NCTC 947) (Lactobacillus brevis), this protein is Large ribosomal subunit protein uL6.